A 185-amino-acid polypeptide reads, in one-letter code: MANAIIEKANQRFEQSFQSLSREYASIRAGRANASLLDRIQVEYYGVPTPLNQLASITVPEARVLLISPFDKSSIKDIERAINASDLGITPANDGSVIRLVIPALTEETRKELAKEVKKVGENQKIAIRNIRRDAMDEAKKQEKNKEITEDELKALEKDIQKATDQAIKHIDGMTSEKEKELLTV.

Belongs to the RRF family.

It localises to the cytoplasm. Responsible for the release of ribosomes from messenger RNA at the termination of protein biosynthesis. May increase the efficiency of translation by recycling ribosomes from one round of translation to another. The chain is Ribosome-recycling factor from Streptococcus uberis (strain ATCC BAA-854 / 0140J).